The following is a 1650-amino-acid chain: HEAT repeat-containing protein 1 homolog (1650 aa).

The tract at residues 1183–1210 (QYDSAASPGSSVAGGRGNRGHRIRQQSL) is disordered. Residues 1609–1645 (LLPFLNELIEDENKQVEAQCQKVINSLQHKFGETFWS) form an HEAT repeat.

The protein belongs to the HEATR1/UTP10 family.

It is found in the nucleus. The protein localises to the nucleolus. In terms of biological role, involved in nucleolar processing of pre-18S ribosomal RNA. Involved in ribosome biosynthesis. The protein is HEAT repeat-containing protein 1 homolog (toe-1) of Caenorhabditis elegans.